Consider the following 151-residue polypeptide: MKKIDIKILDKRIGDVFPLPTYTTSGSAGLDLRVCTQAPQHLSPGETRLLPTGLAVHIADPHLAAMILPRSGLGHKNGIVLGNLVGLIDSDYQGELMLSVWNRSQIDFLINPGDRLAQMVFVPVVQVELNIVSEFTSSQRGSGGFGHSGRQ.

Residues 70–72, N83, 87–89, and M97 contribute to the substrate site; these read RSG and LID.

This sequence belongs to the dUTPase family. Mg(2+) is required as a cofactor.

It carries out the reaction dUTP + H2O = dUMP + diphosphate + H(+). It participates in pyrimidine metabolism; dUMP biosynthesis; dUMP from dCTP (dUTP route): step 2/2. Functionally, this enzyme is involved in nucleotide metabolism: it produces dUMP, the immediate precursor of thymidine nucleotides and it decreases the intracellular concentration of dUTP so that uracil cannot be incorporated into DNA. In Hamiltonella defensa subsp. Acyrthosiphon pisum (strain 5AT), this protein is Deoxyuridine 5'-triphosphate nucleotidohydrolase.